The chain runs to 269 residues: HTH-type transcriptional activator ArnR1 (269 aa).

At 1-217 (MSSMNKRVFD…LLKLTGSYRY (217 aa)) the chain is on the cytoplasmic side. Residues 42–65 (TTEISQTINTSRKSIIDAIRKLVD) constitute a DNA-binding region (H-T-H motif). Residues 218 to 238 (EIALTKVMLFNVISIPVLMYL) form a helical membrane-spanning segment. Over 239–241 (KDQ) the chain is Extracellular. Residues 242–262 (LGILEAIWLYVIILLPLLSIF) form a helical membrane-spanning segment. Over 263 to 269 (AEIFNRI) the chain is Cytoplasmic.

It localises to the cell membrane. In terms of biological role, involved in regulation of archaellar gene expression. May activate flaB transcription upon nutrient starvation by acting on the flaB promoter. This chain is HTH-type transcriptional activator ArnR1, found in Sulfolobus acidocaldarius (strain ATCC 33909 / DSM 639 / JCM 8929 / NBRC 15157 / NCIMB 11770).